Here is an 859-residue protein sequence, read N- to C-terminus: Heterogeneous nuclear ribonucleoprotein U-like protein 1 (859 aa).

The segment at 1 to 103 is necessary for interaction with HRMT1L1; that stretch reads MDVRRLKVNE…GPDGHYVMDN (103 aa). The SAP domain maps to 3-37; it reads VRRLKVNELREELQRRGLDTRGLKAELAERLLAAL. A disordered region spans residues 36-131; the sequence is ALEAEEPEDE…SSYDRRPLDM (96 aa). Positions 38–54 are enriched in acidic residues; it reads EAEEPEDERELEADDDP. The span at 77–88 shows a compositional bias: pro residues; that stretch reads QPPPPGLQPHPE. Lys-117 is covalently cross-linked (Glycyl lysine isopeptide (Lys-Gly) (interchain with G-Cter in SUMO1); alternate). Lys-117 is covalently cross-linked (Glycyl lysine isopeptide (Lys-Gly) (interchain with G-Cter in SUMO2); alternate). Positions 118–130 are enriched in basic and acidic residues; it reads QENESSYDRRPLD. Residue Lys-143 forms a Glycyl lysine isopeptide (Lys-Gly) (interchain with G-Cter in SUMO1); alternate linkage. Residue Lys-143 forms a Glycyl lysine isopeptide (Lys-Gly) (interchain with G-Cter in SUMO2); alternate linkage. The segment at 146 to 206 is disordered; that stretch reads MKQEAPPSFL…QPPAEEDEDD (61 aa). Glycyl lysine isopeptide (Lys-Gly) (interchain with G-Cter in SUMO2) cross-links involve residues Lys-147 and Lys-163. Positions 174-193 are enriched in basic and acidic residues; it reads RPFEENRGRGYFEHREDRRG. Residues 192 to 389 enclose the B30.2/SPRY domain; that stretch reads RGRSPQPPAE…VEFNFGQRAE (198 aa). The residue at position 195 (Ser-195) is a Phosphoserine. Thr-210 is modified (phosphothreonine). The necessary for interaction with TP53 stretch occupies residues 214 to 859; that stretch reads IDTYNCDLHF…GSTQGGTSTQ (646 aa). Glycyl lysine isopeptide (Lys-Gly) (interchain with G-Cter in SUMO2) cross-links involve residues Lys-271 and Lys-450. Residues 457–595 form a necessary for interaction with BRD7 and transcriptional activation region; sequence NAIMDKMRVM…EEADKLVRQY (139 aa). At Ser-513 the chain carries Phosphoserine. Lys-540 participates in a covalent cross-link: Glycyl lysine isopeptide (Lys-Gly) (interchain with G-Cter in SUMO2). Residues 595-612 show a composition bias toward basic and acidic residues; that stretch reads YNEEGRKAGPPPEKRFDS. Positions 595–814 are disordered; that stretch reads YNEEGRKAGP…PPTAQTYPQP (220 aa). A run of 5 repeats spans residues 613–615, 620–622, 639–641, 645–647, and 659–661. Gly residues-rich tracts occupy residues 613–626 and 634–670; these read RGGG…GGGF and PPGG…GGGY. The tract at residues 613 to 661 is 5 X 3 AA repeats of R-G-G; sequence RGGGFRGRGGGGGFQRYDNRGPPGGNRGGFQNRGGGGGSGGGGGNYRGG. The tract at residues 613–661 is necessary for transcription repression; the sequence is RGGGFRGRGGGGGFQRYDNRGPPGGNRGGFQNRGGGGGSGGGGGNYRGG. Arg-639 carries the asymmetric dimethylarginine modification. 2 positions are modified to asymmetric dimethylarginine; alternate: Arg-645 and Arg-659. 2 positions are modified to omega-N-methylarginine; alternate: Arg-645 and Arg-659. Omega-N-methylarginine occurs at positions 664 and 674. A compositionally biased stretch (low complexity) spans 671–696; that stretch reads NQNRWGNNNRDNNNSNNRGNYNRAPQ. The span at 697-720 shows a compositional bias: pro residues; it reads QQPPPQQPPPPQPPPQQPPPPPSY. Ser-721 carries the post-translational modification Phosphoserine. Over residues 728-744 the composition is skewed to polar residues; sequence GASSYNKNSNIPGSSAN. Positions 745-775 are enriched in low complexity; that stretch reads TSTPTVSSYTPPQPSYSQPPYNQGGYTQGYT. 2 stretches are compositionally biased toward pro residues: residues 776–786 and 796–807; these read APPPPPPPPPA and NPAPYTPPPPPT.

Interacts with BRD7, PRMT2, TP53 and NXF1. Associates with histones and BRD7. Methylated.

Its subcellular location is the nucleus. Its function is as follows. Acts as a basic transcriptional regulator. Represses basic transcription driven by several virus and cellular promoters. When associated with BRD7, activates transcription of glucocorticoid-responsive promoter in the absence of ligand-stimulation. Also plays a role in mRNA processing and transport. Binds avidly to poly(G) and poly(C) RNA homopolymers in vitro. The polypeptide is Heterogeneous nuclear ribonucleoprotein U-like protein 1 (Hnrnpul1) (Mus musculus (Mouse)).